The following is a 226-amino-acid chain: Putative pyridoxamine 5'-phosphate oxidase (226 aa).

16-19 (LNSH) lines the pyridoxal 5'-phosphate pocket. Residue 72–75 (RMVL) coordinates FMN. Pyridoxal 5'-phosphate is bound at residue lysine 77. FMN is bound by residues 87–88 (YT), 93–94 (RK), and glutamine 116. Residues tyrosine 134, arginine 138, and serine 142 each contribute to the pyridoxal 5'-phosphate site. FMN is bound by residues 151–152 (QS) and tryptophan 199. Residue 205–207 (RLH) coordinates pyridoxal 5'-phosphate. Arginine 209 serves as a coordination point for FMN.

The protein belongs to the pyridoxamine 5'-phosphate oxidase family. Homodimer. It depends on FMN as a cofactor.

The catalysed reaction is pyridoxamine 5'-phosphate + O2 + H2O = pyridoxal 5'-phosphate + H2O2 + NH4(+). It catalyses the reaction pyridoxine 5'-phosphate + O2 = pyridoxal 5'-phosphate + H2O2. It participates in cofactor metabolism; pyridoxal 5'-phosphate salvage; pyridoxal 5'-phosphate from pyridoxamine 5'-phosphate: step 1/1. The protein operates within cofactor metabolism; pyridoxal 5'-phosphate salvage; pyridoxal 5'-phosphate from pyridoxine 5'-phosphate: step 1/1. Catalyzes the oxidation of either pyridoxine 5'-phosphate (PNP) or pyridoxamine 5'-phosphate (PMP) into pyridoxal 5'-phosphate (PLP). The polypeptide is Putative pyridoxamine 5'-phosphate oxidase (Caenorhabditis elegans).